We begin with the raw amino-acid sequence, 480 residues long: tRNA-2-methylthio-N(6)-dimethylallyladenosine synthase (480 aa).

In terms of domain architecture, MTTase N-terminal spans 32 to 149 (RKLYIRTFGC…LPELIRRRRA (118 aa)). Residues Cys41, Cys78, Cys112, Cys186, Cys190, and Cys193 each coordinate [4Fe-4S] cluster. The region spanning 172–405 (RIEGATAFVS…QALINAQAAA (234 aa)) is the Radical SAM core domain. Positions 408 to 471 (QAMVGTRQRL…PNSLRARVAD (64 aa)) constitute a TRAM domain.

Belongs to the methylthiotransferase family. MiaB subfamily. Monomer. It depends on [4Fe-4S] cluster as a cofactor.

It localises to the cytoplasm. The catalysed reaction is N(6)-dimethylallyladenosine(37) in tRNA + (sulfur carrier)-SH + AH2 + 2 S-adenosyl-L-methionine = 2-methylsulfanyl-N(6)-dimethylallyladenosine(37) in tRNA + (sulfur carrier)-H + 5'-deoxyadenosine + L-methionine + A + S-adenosyl-L-homocysteine + 2 H(+). Its function is as follows. Catalyzes the methylthiolation of N6-(dimethylallyl)adenosine (i(6)A), leading to the formation of 2-methylthio-N6-(dimethylallyl)adenosine (ms(2)i(6)A) at position 37 in tRNAs that read codons beginning with uridine. This Bordetella petrii (strain ATCC BAA-461 / DSM 12804 / CCUG 43448) protein is tRNA-2-methylthio-N(6)-dimethylallyladenosine synthase.